The sequence spans 238 residues: Uridylate kinase (238 aa).

Residue 12-15 (KLSG) participates in ATP binding. G54 is a binding site for UMP. ATP contacts are provided by G55 and R59. UMP contacts are provided by residues D74 and 135–142 (TGNPYFTT). Residues T162, Y168, and D171 each contribute to the ATP site.

The protein belongs to the UMP kinase family. In terms of assembly, homohexamer.

The protein localises to the cytoplasm. The catalysed reaction is UMP + ATP = UDP + ADP. Its pathway is pyrimidine metabolism; CTP biosynthesis via de novo pathway; UDP from UMP (UMPK route): step 1/1. With respect to regulation, inhibited by UTP. Its function is as follows. Catalyzes the reversible phosphorylation of UMP to UDP. The chain is Uridylate kinase from Lawsonia intracellularis (strain PHE/MN1-00).